The primary structure comprises 126 residues: Nucleoside diphosphate kinase B (126 aa).

The ATP site is built by lysine 6, phenylalanine 37, threonine 68, arginine 79, and asparagine 89. Histidine 92 (pros-phosphohistidine intermediate) is an active-site residue.

This sequence belongs to the NDK family. Requires Mg(2+) as cofactor.

Its subcellular location is the cytoplasm. The protein resides in the nucleus. The protein localises to the cell projection. It is found in the lamellipodium. It localises to the ruffle. The catalysed reaction is a 2'-deoxyribonucleoside 5'-diphosphate + ATP = a 2'-deoxyribonucleoside 5'-triphosphate + ADP. The enzyme catalyses a ribonucleoside 5'-diphosphate + ATP = a ribonucleoside 5'-triphosphate + ADP. In terms of biological role, major role in the synthesis of nucleoside triphosphates other than ATP. The chain is Nucleoside diphosphate kinase B (nme2) from Macruronus magellanicus (Patagonian grenadier).